Reading from the N-terminus, the 200-residue chain is Cleavage and polyadenylation specificity factor subunit 5 (200 aa).

Residues 45–170 (LRKAVEGIII…LSLIAVSLYE (126 aa)) enclose the Nudix hydrolase domain. Residues 70–72 (NYF) are interaction with RNA. A Nudix box motif is present at residues 77-98 (GKLKPGENEIDGLIRKLTKKLS).

It belongs to the Nudix hydrolase family. CPSF5 subfamily. Homodimer (via N- and C-terminus); binds RNA as homodimer. Component of the cleavage factor Im (CFIm) complex.

The protein localises to the nucleus. The protein resides in the cytoplasm. Functionally, component of the cleavage factor Im (CFIm) complex that functions as an activator of the pre-mRNA 3'-end cleavage and polyadenylation processing required for the maturation of pre-mRNA into functional mRNAs. CFIm contributes to the recruitment of multiprotein complexes on specific sequences on the pre-mRNA 3'-end, so called cleavage and polyadenylation signals (pA signals). Most pre-mRNAs contain multiple pA signals, resulting in alternative cleavage and polyadenylation (APA) producing mRNAs with variable 3'-end formation. The CFIm complex acts as a key regulator of cleavage and polyadenylation site choice during APA through its binding to 5'-UGUA-3' elements localized in the 3'-untranslated region (UTR) for a huge number of pre-mRNAs. Binds to 5'-UGUA-3' elements localized upstream of pA signals that act as enhancers of pre-mRNA 3'-end processing. The homodimer mediates simultaneous sequence-specific recognition of two 5'-UGUA-3' elements within the pre-mRNA. Plays a role in somatic cell fate transitions and pluripotency by regulating widespread changes in gene expression through an APA-dependent function. Binds to chromatin. The chain is Cleavage and polyadenylation specificity factor subunit 5 from Dictyostelium discoideum (Social amoeba).